The chain runs to 454 residues: Histidine--tRNA ligase (454 aa).

The protein belongs to the class-II aminoacyl-tRNA synthetase family. As to quaternary structure, homodimer.

It localises to the cytoplasm. The catalysed reaction is tRNA(His) + L-histidine + ATP = L-histidyl-tRNA(His) + AMP + diphosphate + H(+). This Bacteroides fragilis (strain ATCC 25285 / DSM 2151 / CCUG 4856 / JCM 11019 / LMG 10263 / NCTC 9343 / Onslow / VPI 2553 / EN-2) protein is Histidine--tRNA ligase.